The chain runs to 1007 residues: Calmodulin-binding transcription activator 1 (1007 aa).

Positions 18–144 (MEQLLSEAQH…YLEVKGNRTS (127 aa)) form a DNA-binding region, CG-1. The span at 148 to 164 (KENNSNSVNGTASVNID) shows a compositional bias: polar residues. Positions 148–227 (KENNSNSVNG…VHGNRVRESD (80 aa)) are disordered. Over residues 165–176 (STASPTSTLSSL) the composition is skewed to low complexity. A compositionally biased stretch (polar residues) spans 183–202 (GDSQQASSVLRPSPEPQTGN). The tract at residues 233–398 (DVRALDTVGN…TVECETAAAG (166 aa)) is transcription activation. ANK repeat units follow at residues 612–641 (DGQGILHFVAALGYDWAIKPVLAAGVNINF) and 645–674 (NGWSALHWAAFSGREETVAVLVSLGADAGA). 2 IQ domains span residues 821–850 (LSCAATHIQKKYRGWKKRKEFLLIRQRIVK) and 844–873 (IRQRIVKIQAHVRGHQVRKQYRTVIWSVGL). A calmodulin-binding region spans residues 869–891 (WSVGLLEKIILRWRRKGNGLRGF). A coiled-coil region spans residues 915-943 (QEDEYDYLKEGRKQTEERLQKALTRVKSM). Residue serine 942 is modified to Phosphoserine.

The protein belongs to the CAMTA family. Expressed in roots, stems, leaves, pollen and siliques.

The protein resides in the nucleus. Its function is as follows. Transcription activator that binds calmodulin in a calcium-dependent manner in vitro. Binds to the DNA consensus sequence 5'-[ACG]CGCG[GTC]-3'. Regulates transcriptional activity in response to calcium signals. Involved in freezing tolerance. Involved in freezing tolerance in association with CAMTA2 and CAMTA3. Contributes together with CAMTA2 and CAMTA3 to the positive regulation of the cold-induced expression of DREB1A/CBF3, DREB1B/CBF1 and DREB1C/CBF2. Involved in drought stress responses by regulating several drought-responsive genes. Involved in auxin signaling and responses to abiotic stresses. Activates the expression of the V-PPase proton pump AVP1 in pollen. In Arabidopsis thaliana (Mouse-ear cress), this protein is Calmodulin-binding transcription activator 1.